The following is a 2242-amino-acid chain: Multifunctional protein CAD (2242 aa).

Residues 1 to 365 (MATLFLDDGS…CARDVKLGVN (365 aa)) are GATase (Glutamine amidotransferase). Residues Ser-44, Gly-222, and Gly-224 each coordinate L-glutamine. In terms of domain architecture, Glutamine amidotransferase type-1 spans 177-363 (KIMAVDCGMK…LECARDVKLG (187 aa)). Cys-252 serves as the catalytic Nucleophile; for GATase activity. L-glutamine contacts are provided by Leu-253, Gln-256, Asn-294, Gly-296, and Phe-297. Catalysis depends on for GATase activity residues His-336 and Glu-338. A linker region spans residues 366–397 (LDKTVKGRVISHYSFKNGTENSKTPPGRIQPH). The interval 398 to 937 (KVLILGSGGL…GEGHDLDFTK (540 aa)) is CPSase A. A CPSase (Carbamoyl-phosphate synthase) region spans residues 398–1462 (KVLILGSGGL…TPPVKTHIDS (1065 aa)). ATP is bound by residues Arg-518, Arg-558, Gly-564, Gly-565, Lys-595, Glu-602, Gly-628, Ile-629, His-630, Gln-671, and Glu-685. 2 consecutive ATP-grasp domains span residues 522 to 714 (VEKM…KLAL) and 1057 to 1248 (SRML…KVIM). Positions 671, 685, and 687 each coordinate Mg(2+). Gln-671, Glu-685, and Asn-687 together coordinate Mn(2+). Residues 938 to 1462 (PHVMVIGSGV…TPPVKTHIDS (525 aa)) are CPSase B. Residues Arg-1093, Lys-1132, Ile-1134, Glu-1139, Gly-1164, Val-1165, His-1166, Ser-1167, Gln-1207, and Glu-1219 each contribute to the ATP site. Mg(2+) contacts are provided by Gln-1207, Glu-1219, and Asn-1221. Mn(2+) contacts are provided by Gln-1207, Glu-1219, and Asn-1221. Residues 1313-1469 (FKIPKKNILL…IDSMSSHKLI (157 aa)) enclose the MGS-like domain. A DHOase (dihydroorotase) region spans residues 1463-1796 (MSSHKLIRLP…KGRVRRVVLR (334 aa)). Zn(2+)-binding residues include His-1478 and His-1480. (S)-dihydroorotate contacts are provided by Arg-1482 and Asn-1512. Zn(2+)-binding residues include Lys-1563, His-1597, Cys-1620, His-1621, and Glu-1644. Lys-1563 carries the post-translational modification N6-carboxylysine. Arg-1668 lines the (S)-dihydroorotate pocket. Asp-1693 contacts Zn(2+). Residue Asp-1693 is the For DHOase activity of the active site. The (S)-dihydroorotate site is built by His-1697 and Pro-1709. The linker stretch occupies residues 1797 to 1934 (GEVAYIDGQV…QAVPHPYSLL (138 aa)). A disordered region spans residues 1829–1862 (PTTVKTPEHSKPTQTETVRTRTASPRRLASSGPA). Positions 1840-1851 (PTQTETVRTRTA) are enriched in polar residues. Positions 1935 to 2242 (LHPFVGQHIL…ALLATVLGKF (308 aa)) are ATCase (Aspartate transcarbamylase). Positions 1992 and 1993 each coordinate carbamoyl phosphate. Lys-2020 provides a ligand contact to L-aspartate. Carbamoyl phosphate is bound by residues Arg-2041, His-2069, and Gln-2072. The L-aspartate site is built by Arg-2102 and Arg-2163. Carbamoyl phosphate is bound by residues Leu-2202 and Pro-2203.

It in the N-terminal section; belongs to the CarA family. In the 2nd section; belongs to the CarB family. The protein in the 3rd section; belongs to the metallo-dependent hydrolases superfamily. DHOase family. CAD subfamily. This sequence in the C-terminal section; belongs to the aspartate/ornithine carbamoyltransferase superfamily. ATCase family. In terms of assembly, homohexamer. Mg(2+) serves as cofactor. Requires Mn(2+) as cofactor. It depends on Zn(2+) as a cofactor. As to expression, present in the testis but not in the liver.

Its subcellular location is the cytoplasm. The protein resides in the nucleus. It catalyses the reaction hydrogencarbonate + L-glutamine + 2 ATP + H2O = carbamoyl phosphate + L-glutamate + 2 ADP + phosphate + 2 H(+). The catalysed reaction is L-glutamine + H2O = L-glutamate + NH4(+). The enzyme catalyses hydrogencarbonate + NH4(+) + 2 ATP = carbamoyl phosphate + 2 ADP + phosphate + 2 H(+). It carries out the reaction carbamoyl phosphate + L-aspartate = N-carbamoyl-L-aspartate + phosphate + H(+). It catalyses the reaction (S)-dihydroorotate + H2O = N-carbamoyl-L-aspartate + H(+). The protein operates within pyrimidine metabolism; UMP biosynthesis via de novo pathway; (S)-dihydroorotate from bicarbonate: step 1/3. It functions in the pathway pyrimidine metabolism; UMP biosynthesis via de novo pathway; (S)-dihydroorotate from bicarbonate: step 2/3. It participates in pyrimidine metabolism; UMP biosynthesis via de novo pathway; (S)-dihydroorotate from bicarbonate: step 3/3. With respect to regulation, allosterically regulated and controlled by phosphorylation. 5-phosphoribose 1-diphosphate is an activator while UMP is an inhibitor of the CPSase reaction. Its function is as follows. Multifunctional protein that encodes the first 3 enzymatic activities of the de novo pyrimidine pathway: carbamoylphosphate synthetase (CPSase; EC 6.3.5.5), aspartate transcarbamylase (ATCase; EC 2.1.3.2) and dihydroorotase (DHOase; EC 3.5.2.3). The CPSase-function is accomplished in 2 steps, by a glutamine-dependent amidotransferase activity (GATase) that binds and cleaves glutamine to produce ammonia, followed by an ammonium-dependent carbamoyl phosphate synthetase, which reacts with the ammonia, hydrogencarbonate and ATP to form carbamoyl phosphate. The endogenously produced carbamoyl phosphate is sequestered and channeled to the ATCase active site. ATCase then catalyzes the formation of carbamoyl-L-aspartate from L-aspartate and carbamoyl phosphate. In the last step, DHOase catalyzes the cyclization of carbamoyl aspartate to dihydroorotate. The polypeptide is Multifunctional protein CAD (CAD) (Squalus acanthias (Spiny dogfish)).